We begin with the raw amino-acid sequence, 325 residues long: Sel1-repeat-containing protein YbeQ (325 aa).

8 Sel1-like repeats span residues 26–61, 63–97, 103–130, 132–167, 168–203, 205–239, 242–275, and 280–305; these read EAQY…EQGH, EAQY…LQGH, ALGW…AESG, SYAQ…LQGH, SDAQ…QQGN, HAQF…AQGS, AYVN…ECND, and YNLA…LYRK.

The protein to E.coli YbeT.

In Escherichia coli (strain K12), this protein is Sel1-repeat-containing protein YbeQ (ybeQ).